We begin with the raw amino-acid sequence, 38 residues long: Large ribosomal subunit protein bL36A (38 aa).

It belongs to the bacterial ribosomal protein bL36 family.

The sequence is that of Large ribosomal subunit protein bL36A from Enterobacter sp. (strain 638).